The chain runs to 66 residues: Cysteine proteinase inhibitor (66 aa).

The Secondary area of contact signature appears at 18 to 22 (QVVAG).

Belongs to the cystatin family. Phytocystatin subfamily. In terms of tissue distribution, in tubers of untreated plants. After ABA treatment or mechanical wounding is mostly accumulated in leaves, to a lesser extent in stems, but not in roots.

The protein is Cysteine proteinase inhibitor (CYS-PIN) of Solanum tuberosum (Potato).